The primary structure comprises 288 residues: Quinate/shikimate dehydrogenase (288 aa).

Positions 71 and 107 each coordinate substrate. NAD(+) contacts are provided by residues 132–135 (AGGA), 155–158 (NRRD), lysine 205, 232–235 (CVYN), and glycine 255.

Belongs to the shikimate dehydrogenase family. In terms of assembly, homodimer.

The catalysed reaction is L-quinate + NAD(+) = 3-dehydroquinate + NADH + H(+). It carries out the reaction L-quinate + NADP(+) = 3-dehydroquinate + NADPH + H(+). The enzyme catalyses shikimate + NADP(+) = 3-dehydroshikimate + NADPH + H(+). It catalyses the reaction shikimate + NAD(+) = 3-dehydroshikimate + NADH + H(+). It participates in metabolic intermediate biosynthesis; chorismate biosynthesis; chorismate from D-erythrose 4-phosphate and phosphoenolpyruvate: step 4/7. In terms of biological role, the actual biological function of YdiB remains unclear, nor is it known whether 3-dehydroshikimate or quinate represents the natural substrate. Catalyzes the reversible NAD-dependent reduction of both 3-dehydroshikimate (DHSA) and 3-dehydroquinate to yield shikimate (SA) and quinate, respectively. It can use both NAD or NADP for catalysis, however it has higher catalytic efficiency with NAD. This chain is Quinate/shikimate dehydrogenase, found in Escherichia coli O7:K1 (strain IAI39 / ExPEC).